Reading from the N-terminus, the 309-residue chain is Glutaminase (309 aa).

Residues Ser-64, Asn-114, Glu-160, Asn-167, Tyr-191, Tyr-243, and Val-261 each contribute to the substrate site.

Belongs to the glutaminase family. As to quaternary structure, homotetramer.

The catalysed reaction is L-glutamine + H2O = L-glutamate + NH4(+). The protein is Glutaminase of Rhizobium etli (strain CIAT 652).